A 134-amino-acid chain; its full sequence is uncharacterized protein (134 aa).

The signal sequence occupies residues methionine 1 to glycine 23. Cysteine 24 carries N-palmitoyl cysteine lipidation. The S-diacylglycerol cysteine moiety is linked to residue cysteine 24.

The protein resides in the cell membrane. This is an uncharacterized protein from Treponema pallidum (strain Nichols).